Here is a 205-residue protein sequence, read N- to C-terminus: Outer-membrane lipoprotein LolB (205 aa).

The N-terminal stretch at 1-17 (MFLRHVIVFSLIALLTG) is a signal peptide. Cys18 carries N-palmitoyl cysteine lipidation. A lipid anchor (S-diacylglycerol cysteine) is attached at Cys18.

Belongs to the LolB family. In terms of assembly, monomer.

The protein localises to the cell outer membrane. Plays a critical role in the incorporation of lipoproteins in the outer membrane after they are released by the LolA protein. The polypeptide is Outer-membrane lipoprotein LolB (Pseudomonas syringae pv. syringae (strain B728a)).